A 307-amino-acid chain; its full sequence is MPSEHPFSDGISTPNPKETMNDTAQITAGYGRRYIVRTPDGTTYEASTRKKRVDFACGDRVRISPVNAEQVVIEDFLPRQSLLYRQDAWKTKLIAANVTQLLIVTAAVPSPSVRLLQRALLAAEAAGIRAVIVLNKADLPETALWLEKLKFYETLGYPVIETRVLENADSLRPVLQGHSNILLGQSGMGKSTLANALLGSQTARTGDISAALDSGKHTTTHARLYDLNGETQLIDSPGLQEFGLHHLQAADLPHYFPDFRHLVGQCRFHNCTHRAEPGCAFKAAAETGAASPERLAFLQGITDELLG.

Positions 1–21 are disordered; it reads MPSEHPFSDGISTPNPKETMN. Polar residues predominate over residues 10–21; the sequence is GISTPNPKETMN. One can recognise a CP-type G domain in the interval 85 to 242; it reads RQDAWKTKLI…LIDSPGLQEF (158 aa). GTP contacts are provided by residues 135–138 and 184–192; these read NKAD and GQSGMGKST. Cys-266, Cys-271, His-273, and Cys-279 together coordinate Zn(2+).

The protein belongs to the TRAFAC class YlqF/YawG GTPase family. RsgA subfamily. Monomer. Associates with 30S ribosomal subunit, binds 16S rRNA. Requires Zn(2+) as cofactor.

The protein resides in the cytoplasm. Its function is as follows. One of several proteins that assist in the late maturation steps of the functional core of the 30S ribosomal subunit. Helps release RbfA from mature subunits. May play a role in the assembly of ribosomal proteins into the subunit. Circularly permuted GTPase that catalyzes slow GTP hydrolysis, GTPase activity is stimulated by the 30S ribosomal subunit. This Neisseria gonorrhoeae (strain ATCC 700825 / FA 1090) protein is Small ribosomal subunit biogenesis GTPase RsgA.